The chain runs to 147 residues: Riboflavin kinase (147 aa).

Residue 15–20 (GLGEGR) participates in CDP binding. Residues Thr-44 and Asn-46 each contribute to the Mg(2+) site. 2 residues coordinate FMN: Thr-97 and Glu-104. 109–112 (TELR) lines the CDP pocket.

The protein belongs to the archaeal riboflavin kinase family. It depends on Mg(2+) as a cofactor.

The enzyme catalyses riboflavin + CTP = CDP + FMN + H(+). It participates in cofactor biosynthesis; FMN biosynthesis; FMN from riboflavin (CTP route): step 1/1. Its function is as follows. Catalyzes the CTP-dependent phosphorylation of riboflavin (vitamin B2) to form flavin mononucleotide (FMN). In Methanopyrus kandleri (strain AV19 / DSM 6324 / JCM 9639 / NBRC 100938), this protein is Riboflavin kinase.